Reading from the N-terminus, the 364-residue chain is Lipoyl synthase, mitochondrial (364 aa).

The disordered stretch occupies residues 34–53; it reads PNFQDFIQNSDNSKDDFENY. Cys99, Cys104, Cys110, Cys130, Cys134, Cys137, and Ser345 together coordinate [4Fe-4S] cluster. Residues 115 to 334 enclose the Radical SAM core domain; it reads EHGTQTATIM…EQRGNELGFL (220 aa).

This sequence belongs to the radical SAM superfamily. Lipoyl synthase family. The cofactor is [4Fe-4S] cluster.

It localises to the mitochondrion. It carries out the reaction [[Fe-S] cluster scaffold protein carrying a second [4Fe-4S](2+) cluster] + N(6)-octanoyl-L-lysyl-[protein] + 2 oxidized [2Fe-2S]-[ferredoxin] + 2 S-adenosyl-L-methionine + 4 H(+) = [[Fe-S] cluster scaffold protein] + N(6)-[(R)-dihydrolipoyl]-L-lysyl-[protein] + 4 Fe(3+) + 2 hydrogen sulfide + 2 5'-deoxyadenosine + 2 L-methionine + 2 reduced [2Fe-2S]-[ferredoxin]. It functions in the pathway protein modification; protein lipoylation via endogenous pathway; protein N(6)-(lipoyl)lysine from octanoyl-[acyl-carrier-protein]: step 2/2. In terms of biological role, catalyzes the radical-mediated insertion of two sulfur atoms into the C-6 and C-8 positions of the octanoyl moiety bound to the lipoyl domains of lipoate-dependent enzymes, thereby converting the octanoylated domains into lipoylated derivatives. The sequence is that of Lipoyl synthase, mitochondrial from Drosophila grimshawi (Hawaiian fruit fly).